Reading from the N-terminus, the 318-residue chain is UDP-3-O-acylglucosamine N-acyltransferase (318 aa).

His-230 acts as the Proton acceptor in catalysis.

It belongs to the transferase hexapeptide repeat family. LpxD subfamily. As to quaternary structure, homotrimer.

The catalysed reaction is a UDP-3-O-[(3R)-3-hydroxyacyl]-alpha-D-glucosamine + a (3R)-hydroxyacyl-[ACP] = a UDP-2-N,3-O-bis[(3R)-3-hydroxyacyl]-alpha-D-glucosamine + holo-[ACP] + H(+). The protein operates within bacterial outer membrane biogenesis; LPS lipid A biosynthesis. In terms of biological role, catalyzes the N-acylation of UDP-3-O-acylglucosamine using 3-hydroxyacyl-ACP as the acyl donor. Is involved in the biosynthesis of lipid A, a phosphorylated glycolipid that anchors the lipopolysaccharide to the outer membrane of the cell. This chain is UDP-3-O-acylglucosamine N-acyltransferase, found in Wolinella succinogenes (strain ATCC 29543 / DSM 1740 / CCUG 13145 / JCM 31913 / LMG 7466 / NCTC 11488 / FDC 602W) (Vibrio succinogenes).